Reading from the N-terminus, the 131-residue chain is Small ribosomal subunit protein uS8 (131 aa).

The protein belongs to the universal ribosomal protein uS8 family. Part of the 30S ribosomal subunit. Contacts proteins S5 and S12.

One of the primary rRNA binding proteins, it binds directly to 16S rRNA central domain where it helps coordinate assembly of the platform of the 30S subunit. In Dechloromonas aromatica (strain RCB), this protein is Small ribosomal subunit protein uS8.